A 685-amino-acid chain; its full sequence is uncharacterized protein (685 aa).

2 disordered regions span residues 502–538 (NLNQ…SLNK) and 635–685 (RSKR…IHNA). Positions 518–538 (SSENMTKFPSSRGKSTVSLNK) are enriched in polar residues. A compositionally biased stretch (basic residues) spans 675 to 685 (KLKKSLIIHNA).

This is an uncharacterized protein from Homo sapiens (Human).